The chain runs to 180 residues: tRNA (cytidine(56)-2'-O)-methyltransferase (180 aa).

Residues Leu84 and 112–116 (GAEKV) contribute to the S-adenosyl-L-methionine site.

The protein belongs to the aTrm56 family. In terms of assembly, homodimer.

It is found in the cytoplasm. The catalysed reaction is cytidine(56) in tRNA + S-adenosyl-L-methionine = 2'-O-methylcytidine(56) in tRNA + S-adenosyl-L-homocysteine + H(+). Its function is as follows. Specifically catalyzes the AdoMet-dependent 2'-O-ribose methylation of cytidine at position 56 in tRNAs. The chain is tRNA (cytidine(56)-2'-O)-methyltransferase from Haloarcula marismortui (strain ATCC 43049 / DSM 3752 / JCM 8966 / VKM B-1809) (Halobacterium marismortui).